A 566-amino-acid chain; its full sequence is Arginine--tRNA ligase (566 aa).

Positions 124-134 match the 'HIGH' region motif; it reads ANPNGPLHIGH.

Belongs to the class-I aminoacyl-tRNA synthetase family.

It localises to the cytoplasm. It catalyses the reaction tRNA(Arg) + L-arginine + ATP = L-arginyl-tRNA(Arg) + AMP + diphosphate. The polypeptide is Arginine--tRNA ligase (argS) (Methanocaldococcus jannaschii (strain ATCC 43067 / DSM 2661 / JAL-1 / JCM 10045 / NBRC 100440) (Methanococcus jannaschii)).